Consider the following 510-residue polypeptide: AAA-ATPase At3g28540 (510 aa).

The chain crosses the membrane as a helical span at residues 7-25 (LFGFTGTTMASLMFFWSVY). 246-253 (GPPGTGKS) provides a ligand contact to ATP. A disordered region spans residues 460–510 (KEKAKKLAEEEKMKKAARDARRIKKKAEEEHKKKNKVEENGDVSHDNGNHI).

This sequence belongs to the AAA ATPase family. BCS1 subfamily. It depends on Mg(2+) as a cofactor.

Its subcellular location is the membrane. The enzyme catalyses ATP + H2O = ADP + phosphate + H(+). The chain is AAA-ATPase At3g28540 from Arabidopsis thaliana (Mouse-ear cress).